The primary structure comprises 203 residues: Dephospho-CoA kinase (203 aa).

The DPCK domain occupies 6–203; the sequence is ILGLTGGIGS…FYLTLRGGRA (198 aa). 14–19 provides a ligand contact to ATP; sequence GSGKSA.

The protein belongs to the CoaE family.

Its subcellular location is the cytoplasm. It carries out the reaction 3'-dephospho-CoA + ATP = ADP + CoA + H(+). It functions in the pathway cofactor biosynthesis; coenzyme A biosynthesis; CoA from (R)-pantothenate: step 5/5. Catalyzes the phosphorylation of the 3'-hydroxyl group of dephosphocoenzyme A to form coenzyme A. The sequence is that of Dephospho-CoA kinase from Pseudomonas aeruginosa (strain ATCC 15692 / DSM 22644 / CIP 104116 / JCM 14847 / LMG 12228 / 1C / PRS 101 / PAO1).